Here is a 101-residue protein sequence, read N- to C-terminus: Large ribosomal subunit protein bL28 (101 aa).

The protein belongs to the bacterial ribosomal protein bL28 family.

The sequence is that of Large ribosomal subunit protein bL28 from Caulobacter sp. (strain K31).